The sequence spans 126 residues: Holo-[acyl-carrier-protein] synthase (126 aa).

Residues Asp9 and Glu58 each contribute to the Mg(2+) site.

It belongs to the P-Pant transferase superfamily. AcpS family. Mg(2+) serves as cofactor.

It localises to the cytoplasm. The catalysed reaction is apo-[ACP] + CoA = holo-[ACP] + adenosine 3',5'-bisphosphate + H(+). Transfers the 4'-phosphopantetheine moiety from coenzyme A to a Ser of acyl-carrier-protein. The chain is Holo-[acyl-carrier-protein] synthase from Yersinia enterocolitica serotype O:8 / biotype 1B (strain NCTC 13174 / 8081).